The chain runs to 308 residues: MTENAAPTRAGFVALIGEPNAGKSTLTNAMVGAKVSIVTHKVQTTRARIRGVALEGAAQIVFVDTPGLFRPRRRLDRAMVAAAWGGAADADIVVLMVEAHRGMTDGVRAILETLNERRDPKQIVALAINKIDRVKSEVLLKLTQDLNAAYPFAETFMISAEKGYGVADLRAWLGASLPEGPWMYPEDQIADVPLRMIAAEITREKLTLRLHQELPYQLTVETENWEERKDGSVRIDQVVYVMRDGHKGILLGHKGETAKAVSKAAREELVEFLGRKVHLFLQVKVRPNWLEEKERFDEMGLDFRDGNA.

One can recognise an Era-type G domain in the interval 9–179 (RAGFVALIGE…RAWLGASLPE (171 aa)). The interval 17 to 24 (GEPNAGKS) is G1. GTP is bound at residue 17 to 24 (GEPNAGKS). Positions 43 to 47 (QTTRA) are G2. Positions 64 to 67 (DTPG) are G3. GTP-binding positions include 64 to 68 (DTPGL) and 129 to 132 (NKID). The interval 129-132 (NKID) is G4. The interval 158-160 (ISA) is G5. Positions 210–287 (LHQELPYQLT…HLFLQVKVRP (78 aa)) constitute a KH type-2 domain.

It belongs to the TRAFAC class TrmE-Era-EngA-EngB-Septin-like GTPase superfamily. Era GTPase family. As to quaternary structure, monomer.

The protein resides in the cytoplasm. The protein localises to the cell inner membrane. In terms of biological role, an essential GTPase that binds both GDP and GTP, with rapid nucleotide exchange. Plays a role in 16S rRNA processing and 30S ribosomal subunit biogenesis and possibly also in cell cycle regulation and energy metabolism. The protein is GTPase Era of Dinoroseobacter shibae (strain DSM 16493 / NCIMB 14021 / DFL 12).